A 100-amino-acid chain; its full sequence is Small ribosomal subunit protein bS20 (100 aa).

The protein belongs to the bacterial ribosomal protein bS20 family.

Its function is as follows. Binds directly to 16S ribosomal RNA. The sequence is that of Small ribosomal subunit protein bS20 from Prochlorococcus marinus (strain MIT 9211).